The following is a 267-amino-acid chain: Hydroxyethylthiazole kinase (267 aa).

Residue Met48 coordinates substrate. The ATP site is built by Arg124 and Ser170. Gly197 contacts substrate.

The protein belongs to the Thz kinase family. Mg(2+) is required as a cofactor.

The catalysed reaction is 5-(2-hydroxyethyl)-4-methylthiazole + ATP = 4-methyl-5-(2-phosphooxyethyl)-thiazole + ADP + H(+). The protein operates within cofactor biosynthesis; thiamine diphosphate biosynthesis; 4-methyl-5-(2-phosphoethyl)-thiazole from 5-(2-hydroxyethyl)-4-methylthiazole: step 1/1. Its function is as follows. Catalyzes the phosphorylation of the hydroxyl group of 4-methyl-5-beta-hydroxyethylthiazole (THZ). This chain is Hydroxyethylthiazole kinase, found in Aliivibrio fischeri (strain ATCC 700601 / ES114) (Vibrio fischeri).